Consider the following 115-residue polypeptide: Procyclic form-specific polypeptide (115 aa).

A signal peptide spans 1 to 27; the sequence is MAPRSLYLLAVLLFSANLFAGVGFAAA. The interval 27-97 is disordered; sequence AAEGPEDKGL…PEPEPGAATL (71 aa). The segment covering 31–52 has biased composition (basic and acidic residues); it reads PEDKGLTKGGKGKGEKGTKVGA. The N-linked (GlcNAc...) asparagine glycan is linked to Asn56. 17 tandem repeats follow at residues 59-60, 61-62, 63-64, 65-66, 67-68, 69-70, 71-72, 73-74, 75-76, 77-78, 79-80, 81-82, 83-84, 85-86, 87-88, 89-90, and 91-92. The 17 X 2 AA tandem repeats of [DE]-P stretch occupies residues 59–92; sequence DPDPEPEPEPEPEPEPEPEPEPEPEPEPEPEPEP. The segment covering 60–90 has biased composition (acidic residues); it reads PDPEPEPEPEPEPEPEPEPEPEPEPEPEPEP. The GPI-anchor amidated glycine moiety is linked to residue Gly93. The propeptide at 94–115 is removed in mature form; that stretch reads AATLKSVALPFAIAAAALVAAF.

The protein localises to the cell membrane. In terms of biological role, major surface antigen of procyclic forms. The protein is Procyclic form-specific polypeptide (PROA) of Trypanosoma brucei brucei.